The sequence spans 306 residues: Serine/threonine-protein phosphatase PP2A-2 catalytic subunit (306 aa).

The Mn(2+) site is built by Asp54, His56, Asp82, and Asn114. The active-site Proton donor is the His115. Residues His164 and His238 each contribute to the Mn(2+) site. A Leucine methyl ester modification is found at Leu306.

The protein belongs to the PPP phosphatase family. PP-2A subfamily. As to quaternary structure, PP2A consists of a common heterodimeric core enzyme, composed of a 36 kDa catalytic subunit (subunit C) and a 65 kDa constant regulatory subunit (subunit A), that associates with a variety of regulatory subunits such as subunits B (the R2/B/PR55/B55, R3/B''/PR72/PR130/PR59 and R5/B'/B56 families). Interacts with B'THETA. Interacts with HDA14. Interacts with SRK2E/OST1. Interacts with TAP46. It depends on Mn(2+) as a cofactor. Reversibly methyl esterified on Leu-306 by leucine carboxyl methyltransferase 1 (LCMT1) and pectin methylesterase 1 (PME1). Carboxyl methylation influences the affinity of the catalytic subunit for the different regulatory subunits, thereby modulating the PP2A holoenzyme's substrate specificity, enzyme activity and cellular localization. Post-translationally, phosphorylation of either threonine (by autophosphorylation-activated protein kinase) or tyrosine results in inactivation of the phosphatase. Auto-dephosphorylation has been suggested as a mechanism for reactivation. As to expression, expressed in root meristem, emerging lateral roots, leaf vasculature, stipules, guard cells, anthers and pollen grains.

It localises to the cytoplasm. The protein localises to the cytosol. It is found in the nucleus. Its subcellular location is the peroxisome. It catalyses the reaction O-phospho-L-seryl-[protein] + H2O = L-seryl-[protein] + phosphate. The catalysed reaction is O-phospho-L-threonyl-[protein] + H2O = L-threonyl-[protein] + phosphate. Its function is as follows. Dephosphorylates and activates the actin-depolymerizing factor ADF1, which, in turn, regulates actin cytoskeleton remodeling and is involved in the blue light photoreceptor PHOT2-mediated chloroplast avoidance movements. Associates with the serine/threonine-protein phosphatase PP2A regulatory subunits A and B' to positively regulates beta-oxidation of fatty acids and protoauxins in peroxisomes by dephosphorylating peroxisomal beta-oxidation-related proteins. Acts as a negative regulator of abscisic acid (ABA) signaling. May regulate ABA-dependent gene expression. Involved in the light-dependent activation of nitrate reductase. In Arabidopsis thaliana (Mouse-ear cress), this protein is Serine/threonine-protein phosphatase PP2A-2 catalytic subunit.